Consider the following 248-residue polypeptide: Proteasome subunit alpha type-7 (248 aa).

S130 carries O-linked (GlcNAc) serine glycosylation. Y153 carries the post-translational modification Phosphotyrosine. N6-acetyllysine is present on K227.

It belongs to the peptidase T1A family. In terms of assembly, the 26S proteasome consists of a 20S proteasome core and two 19S regulatory subunits. The 20S proteasome core is a barrel-shaped complex made of 28 subunits that are arranged in four stacked rings. The two outer rings are each formed by seven alpha subunits, and the two inner rings are formed by seven beta subunits. The proteolytic activity is exerted by three beta-subunits PSMB5, PSMB6 and PSMB7. PSMA7 interacts directly with the PSMG1-PSMG2 heterodimer which promotes 20S proteasome assembly. Interacts with HIF1A. Interacts with RAB7A. Interacts with PRKN. Interacts with ABL1 and ABL2. Interacts with EMAP2. Interacts with MAVS.

It localises to the cytoplasm. The protein resides in the nucleus. Its function is as follows. Component of the 20S core proteasome complex involved in the proteolytic degradation of most intracellular proteins. This complex plays numerous essential roles within the cell by associating with different regulatory particles. Associated with two 19S regulatory particles, forms the 26S proteasome and thus participates in the ATP-dependent degradation of ubiquitinated proteins. The 26S proteasome plays a key role in the maintenance of protein homeostasis by removing misfolded or damaged proteins that could impair cellular functions, and by removing proteins whose functions are no longer required. Associated with the PA200 or PA28, the 20S proteasome mediates ubiquitin-independent protein degradation. This type of proteolysis is required in several pathways including spermatogenesis (20S-PA200 complex) or generation of a subset of MHC class I-presented antigenic peptides (20S-PA28 complex). Inhibits the transactivation function of HIF-1A under both normoxic and hypoxia-mimicking conditions. The interaction with EMAP2 increases the proteasome-mediated HIF-1A degradation under the hypoxic conditions. Plays a role in hepatitis C virus internal ribosome entry site-mediated translation. Mediates nuclear translocation of the androgen receptor (AR) and thereby enhances androgen-mediated transactivation. Promotes MAVS degradation and thereby negatively regulates MAVS-mediated innate immune response. This chain is Proteasome subunit alpha type-7 (PSMA7), found in Bos taurus (Bovine).